Here is a 282-residue protein sequence, read N- to C-terminus: (4-alkanoyl-5-oxo-2,5-dihydrofuran-3-yl)methyl phosphate reductase (282 aa).

6 to 11 (GATGAV) contacts NADP(+).

The protein belongs to the NmrA-type oxidoreductase family.

The catalysed reaction is a [(3S,4R)-4-alkanoyl-5-oxooxolan-3-yl]methyl phosphate + NADP(+) = a (4-alkanoyl-5-oxo-2,5-dihydrofuran-3-yl)methyl phosphate + NADPH + H(+). It catalyses the reaction [(3S,4R)-4-(6-methylheptanoyl)-5-oxooxolan-3-yl]methyl phosphate + NADP(+) = [4-(6-methylheptanoyl)-5-oxo-2H-furan-3-yl]methyl phosphate + NADPH + H(+). Functionally, involved in the biosynthesis of A factor (2-isocapryloyl-3R-hydroxymethyl-gamma-butyrolactone), a gamma-butyrolactone autoregulator that triggers secondary metabolism and morphogenesis in Streptomyces. Catalyzes the reduction of the butenolide phosphate produced by nonenzymatic intramolecular condensation of the 8-methyl-3-oxononanoyl-DHAP ester. The sequence is that of (4-alkanoyl-5-oxo-2,5-dihydrofuran-3-yl)methyl phosphate reductase from Streptomyces griseus subsp. griseus (strain JCM 4626 / CBS 651.72 / NBRC 13350 / KCC S-0626 / ISP 5235).